Consider the following 286-residue polypeptide: Foldase protein PrsA 1 (286 aa).

The first 18 residues, methionine 1–alanine 18, serve as a signal peptide directing secretion. Cysteine 19 carries N-palmitoyl cysteine lipidation. The S-diacylglycerol cysteine moiety is linked to residue cysteine 19. A PpiC domain is found at lysine 130–aspartate 220.

Belongs to the PrsA family.

Its subcellular location is the cell membrane. The catalysed reaction is [protein]-peptidylproline (omega=180) = [protein]-peptidylproline (omega=0). Its function is as follows. Plays a major role in protein secretion by helping the post-translocational extracellular folding of several secreted proteins. The polypeptide is Foldase protein PrsA 1 (prsA1) (Bacillus cereus (strain ATCC 14579 / DSM 31 / CCUG 7414 / JCM 2152 / NBRC 15305 / NCIMB 9373 / NCTC 2599 / NRRL B-3711)).